The sequence spans 793 residues: Sucrose synthase (793 aa).

The interval 263 to 742 (MISRILIVSI…ALARVAERYT (480 aa)) is GT-B glycosyltransferase.

The protein belongs to the glycosyltransferase 1 family. As to quaternary structure, homotetramer.

The catalysed reaction is an NDP-alpha-D-glucose + D-fructose = a ribonucleoside 5'-diphosphate + sucrose + H(+). The enzyme catalyses ADP-alpha-D-glucose + D-fructose = sucrose + ADP + H(+). Its function is as follows. Catalyzes the reversible conversion of sucrose and a nucleotide disphosphate (NDP) into fructose and NDP-glucose; although the reaction is freely reversible in vitro, the physiological reaction seems to be sucrose cleavage. Unlike characterized plant enzymes prefers ADP as a cosubstrate, whereas plants prefer UDP. The KM for sucrose is 45-fold lower in the presence of ADP than UDP. Its preference for ADP over UDP suggests it may directly link sucrose and glycogen metabolism. This is Sucrose synthase from Acidithiobacillus caldus (strain ATCC 51756 / DSM 8584 / KU).